Here is a 2511-residue protein sequence, read N- to C-terminus: Fatty acid synthase (2511 aa).

An N-acetylmethionine modification is found at M1. In terms of domain architecture, Ketosynthase family 3 (KS3) spans 1 to 406 (MEEVVIAGMS…GSNVHIILRP (406 aa)). A Phosphoserine modification is found at S63. Position 70 is an N6-acetyllysine (K70). The active-site For beta-ketoacyl synthase activity is C161. At S207 the chain carries Phosphoserine. The active-site For beta-ketoacyl synthase activity is the H293. Residue K298 is modified to N6-acetyllysine. H331 serves as the catalytic For beta-ketoacyl synthase activity. The tract at residues 429-817 (RTPEAVQKLL…IDANPNALFP (389 aa)) is acyl and malonyl transferases. Residues K436 and K528 each carry the N6-acetyllysine modification. S581 serves as the catalytic For malonyltransferase activity. An acyl-CoA-binding positions include 647–648 (DT) and F671. Residue K673 is modified to N6-acetyllysine. Residue S725 is modified to Phosphoserine. An an acyl-CoA-binding site is contributed by R773. The interval 838 to 966 (HSLAWDVPAA…KVYQWDDPDP (129 aa)) is N-terminal hotdog fold. Positions 838–1108 (HSLAWDVPAA…TESAPRRQQE (271 aa)) constitute a PKS/mFAS DH domain. The active-site Proton acceptor; for dehydratase activity is the H878. A C-terminal hotdog fold region spans residues 981 to 1108 (EPLFLAQAEV…TESAPRRQQE (128 aa)). K992 carries the post-translational modification N6-acetyllysine. Catalysis depends on D1031, which acts as the Proton donor; for dehydratase activity. Phosphoserine is present on residues S1174 and S1411. C1471 is modified (S-nitrosocysteine). 2 positions are modified to phosphoserine: S1584 and S1594. The tract at residues 1635-1863 (DVPSNWTLEE…VQVLAEEPEA (229 aa)) is enoyl reductase. An NADP(+)-binding site is contributed by 1671 to 1688 (LLIHSGSGGVGQAAIAIA). K1704 carries the N6-(pyridoxal phosphate)lysine; alternate modification. K1704 bears the N6-acetyllysine; alternate mark. N6-acetyllysine occurs at positions 1771 and 1847. The segment at 1864 to 2118 (VLKGAKPKLM…FVLAEKAAAY (255 aa)) is beta-ketoacyl reductase. 1886–1901 (SYIIAGGLGGFGLELA) contributes to the NADP(+) binding site. The residue at position 1995 (K1995) is an N6-acetyllysine. The residue at position 2091 (C2091) is an S-nitrosocysteine. Residues 2121-2198 (RDSQRDLVEA…ELSSKADEAS (78 aa)) enclose the Carrier domain. S2156 carries the post-translational modification O-(pantetheine 4'-phosphoryl)serine; alternate. S2156 carries the phosphoserine; alternate modification. Residue S2198 is modified to Phosphoserine. A phosphothreonine mark is found at T2204 and T2215. The segment at 2207–2511 (EDGLAQQQTQ…AEPRVSVREG (305 aa)) is thioesterase. A Phosphoserine modification is found at S2236. S2308 serves as the catalytic For thioesterase activity. K2391 carries the N6-acetyllysine modification. K2449 participates in a covalent cross-link: Glycyl lysine isopeptide (Lys-Gly) (interchain with G-Cter in SUMO2). The For thioesterase activity role is filled by H2481.

As to quaternary structure, homodimer which is arranged in a head to tail fashion. Interacts with CEACAM1; this interaction is insulin and phosphorylation-dependent; reduces fatty-acid synthase activity. Post-translationally, S-nitrosylation of Fatty acid synthase at cysteine residues Cys-1471 or Cys-2091 is important for the enzyme dimerization. In adipocytes, S-nitrosylation of Fatty acid synthase occurs under physiological conditions and gradually increases during adipogenesis. As to expression, ubiquitous. Prominent expression in brain, lung, liver and mammary gland.

It localises to the cytoplasm. It is found in the melanosome. It catalyses the reaction acetyl-CoA + n malonyl-CoA + 2n NADPH + 2n H(+) = a long-chain fatty acid + (n+1) CoA + n CO2 + 2n NADP(+).. The catalysed reaction is holo-[ACP] + acetyl-CoA = acetyl-[ACP] + CoA. The enzyme catalyses holo-[ACP] + malonyl-CoA = malonyl-[ACP] + CoA. It carries out the reaction a fatty acyl-[ACP] + malonyl-[ACP] + H(+) = a 3-oxoacyl-[ACP] + holo-[ACP] + CO2. It catalyses the reaction a (3R)-hydroxyacyl-[ACP] + NADP(+) = a 3-oxoacyl-[ACP] + NADPH + H(+). The catalysed reaction is a (3R)-hydroxyacyl-[ACP] = a (2E)-enoyl-[ACP] + H2O. The enzyme catalyses a 2,3-saturated acyl-[ACP] + NADP(+) = a (2E)-enoyl-[ACP] + NADPH + H(+). It carries out the reaction hexadecanoyl-[ACP] + H2O = hexadecanoate + holo-[ACP] + H(+). It catalyses the reaction acetyl-[ACP] + malonyl-[ACP] + H(+) = 3-oxobutanoyl-[ACP] + holo-[ACP] + CO2. The catalysed reaction is 3-oxobutanoyl-[ACP] + NADPH + H(+) = (3R)-hydroxybutanoyl-[ACP] + NADP(+). The enzyme catalyses (3R)-hydroxybutanoyl-[ACP] = (2E)-butenoyl-[ACP] + H2O. It carries out the reaction (2E)-butenoyl-[ACP] + NADPH + H(+) = butanoyl-[ACP] + NADP(+). It catalyses the reaction butanoyl-[ACP] + malonyl-[ACP] + H(+) = 3-oxohexanoyl-[ACP] + holo-[ACP] + CO2. The catalysed reaction is 3-oxohexanoyl-[ACP] + NADPH + H(+) = (3R)-hydroxyhexanoyl-[ACP] + NADP(+). The enzyme catalyses (3R)-hydroxyhexanoyl-[ACP] = (2E)-hexenoyl-[ACP] + H2O. It carries out the reaction (2E)-hexenoyl-[ACP] + NADPH + H(+) = hexanoyl-[ACP] + NADP(+). It catalyses the reaction hexanoyl-[ACP] + malonyl-[ACP] + H(+) = 3-oxooctanoyl-[ACP] + holo-[ACP] + CO2. The catalysed reaction is 3-oxooctanoyl-[ACP] + NADPH + H(+) = (3R)-hydroxyoctanoyl-[ACP] + NADP(+). The enzyme catalyses (3R)-hydroxyoctanoyl-[ACP] = (2E)-octenoyl-[ACP] + H2O. It carries out the reaction (2E)-octenoyl-[ACP] + NADPH + H(+) = octanoyl-[ACP] + NADP(+). It catalyses the reaction octanoyl-[ACP] + malonyl-[ACP] + H(+) = 3-oxodecanoyl-[ACP] + holo-[ACP] + CO2. The catalysed reaction is 3-oxodecanoyl-[ACP] + NADPH + H(+) = (3R)-hydroxydecanoyl-[ACP] + NADP(+). The enzyme catalyses (3R)-hydroxydecanoyl-[ACP] = (2E)-decenoyl-[ACP] + H2O. It carries out the reaction (2E)-decenoyl-[ACP] + NADPH + H(+) = decanoyl-[ACP] + NADP(+). It catalyses the reaction decanoyl-[ACP] + malonyl-[ACP] + H(+) = 3-oxododecanoyl-[ACP] + holo-[ACP] + CO2. The catalysed reaction is 3-oxododecanoyl-[ACP] + NADPH + H(+) = (3R)-hydroxydodecanoyl-[ACP] + NADP(+). The enzyme catalyses (3R)-hydroxydodecanoyl-[ACP] = (2E)-dodecenoyl-[ACP] + H2O. It carries out the reaction (2E)-dodecenoyl-[ACP] + NADPH + H(+) = dodecanoyl-[ACP] + NADP(+). It catalyses the reaction dodecanoyl-[ACP] + malonyl-[ACP] + H(+) = 3-oxotetradecanoyl-[ACP] + holo-[ACP] + CO2. The catalysed reaction is 3-oxotetradecanoyl-[ACP] + NADPH + H(+) = (3R)-hydroxytetradecanoyl-[ACP] + NADP(+). The enzyme catalyses (3R)-hydroxytetradecanoyl-[ACP] = (2E)-tetradecenoyl-[ACP] + H2O. It carries out the reaction (2E)-tetradecenoyl-[ACP] + NADPH + H(+) = tetradecanoyl-[ACP] + NADP(+). It catalyses the reaction tetradecanoyl-[ACP] + malonyl-[ACP] + H(+) = 3-oxohexadecanoyl-[ACP] + holo-[ACP] + CO2. The catalysed reaction is 3-oxohexadecanoyl-[ACP] + NADPH + H(+) = (3R)-hydroxyhexadecanoyl-[ACP] + NADP(+). The enzyme catalyses (3R)-hydroxyhexadecanoyl-[ACP] = (2E)-hexadecenoyl-[ACP] + H2O. It carries out the reaction (2E)-hexadecenoyl-[ACP] + NADPH + H(+) = hexadecanoyl-[ACP] + NADP(+). It catalyses the reaction hexadecanoyl-[ACP] + malonyl-[ACP] + H(+) = 3-oxooctadecanoyl-[ACP] + holo-[ACP] + CO2. The catalysed reaction is 3-oxooctadecanoyl-[ACP] + NADPH + H(+) = (3R)-hydroxyoctadecanoyl-[ACP] + NADP(+). The enzyme catalyses (3R)-hydroxyoctadecanoyl-[ACP] = (2E)-octadecenoyl-[ACP] + H2O. It carries out the reaction (2E)-octadecenoyl-[ACP] + NADPH + H(+) = octadecanoyl-[ACP] + NADP(+). It catalyses the reaction tetradecanoyl-[ACP] + H2O = tetradecanoate + holo-[ACP] + H(+). The catalysed reaction is octadecanoyl-[ACP] + H2O = octadecanoate + holo-[ACP] + H(+). Its pathway is lipid metabolism; fatty acid biosynthesis. Its activity is regulated as follows. Activated by S-nitrosylation which promotes enzyme dimerization. Cerulenin, a potent non-competitive pharmacological inhibitor of FAS, binds covalently to the active site of the condensing enzyme region, inactivating a key enzyme step in fatty acid synthesis. Its function is as follows. Fatty acid synthetase is a multifunctional enzyme that catalyzes the de novo biosynthesis of long-chain saturated fatty acids starting from acetyl-CoA and malonyl-CoA in the presence of NADPH. This multifunctional protein contains 7 catalytic activities and a site for the binding of the prosthetic group 4'-phosphopantetheine of the acyl carrier protein ([ACP]) domain. In terms of biological role, (Microbial infection) Fatty acid synthetase activity is required for SARS coronavirus-2/SARS-CoV-2 replication. In Homo sapiens (Human), this protein is Fatty acid synthase (FASN).